The primary structure comprises 290 residues: ATP synthase gamma chain (290 aa).

This sequence belongs to the ATPase gamma chain family. As to quaternary structure, F-type ATPases have 2 components, CF(1) - the catalytic core - and CF(0) - the membrane proton channel. CF(1) has five subunits: alpha(3), beta(3), gamma(1), delta(1), epsilon(1). CF(0) has three main subunits: a, b and c.

Its subcellular location is the cell inner membrane. Functionally, produces ATP from ADP in the presence of a proton gradient across the membrane. The gamma chain is believed to be important in regulating ATPase activity and the flow of protons through the CF(0) complex. In Paracoccus denitrificans (strain Pd 1222), this protein is ATP synthase gamma chain.